A 377-amino-acid chain; its full sequence is Nitric oxide reductase FlRd-NAD(+) reductase (377 aa).

This sequence belongs to the FAD-dependent oxidoreductase family. The cofactor is FAD.

It localises to the cytoplasm. The enzyme catalyses 2 reduced [nitric oxide reductase rubredoxin domain] + NAD(+) + H(+) = 2 oxidized [nitric oxide reductase rubredoxin domain] + NADH. It functions in the pathway nitrogen metabolism; nitric oxide reduction. Functionally, one of at least two accessory proteins for anaerobic nitric oxide (NO) reductase. Reduces the rubredoxin moiety of NO reductase. This is Nitric oxide reductase FlRd-NAD(+) reductase from Escherichia coli O9:H4 (strain HS).